Reading from the N-terminus, the 240-residue chain is Small ribosomal subunit protein uS3m (240 aa).

This sequence belongs to the universal ribosomal protein uS3 family.

It is found in the mitochondrion. The polypeptide is Small ribosomal subunit protein uS3m (RPS3) (Chondrus crispus (Carrageen Irish moss)).